Consider the following 143-residue polypeptide: UPF0201 protein Pcal_0593 (143 aa).

This sequence belongs to the UPF0201 family.

This Pyrobaculum calidifontis (strain DSM 21063 / JCM 11548 / VA1) protein is UPF0201 protein Pcal_0593.